The chain runs to 73 residues: SIFamide-related peptide (73 aa).

A signal peptide spans 1-23 (MVSIRLTFALAIVAIIFAFSVDA). Phenylalanine 35 is subject to Phenylalanine amide. Residues 39–73 (SNTMTDYEFTSRALSAICEVASETCTAWMSRQESN) constitute a propeptide that is removed on maturation.

As to expression, expressed in brain, the retrocerebral complex and in ventral, thoracic and abdominal ganglia (at protein level).

It is found in the secreted. In Camponotus floridanus (Florida carpenter ant), this protein is SIFamide-related peptide.